Reading from the N-terminus, the 763-residue chain is Thiamine biosynthesis multifunctional protein ThiED (763 aa).

Positions 1–210 (MTDFSLYLVT…ANPAAAATRL (210 aa)) are thiamine-phosphate synthase. Residues 37–41 (QLRDK) and asparagine 69 each bind 4-amino-2-methyl-5-(diphosphooxymethyl)pyrimidine. Aspartate 70 and aspartate 88 together coordinate Mg(2+). Serine 107 contributes to the 4-amino-2-methyl-5-(diphosphooxymethyl)pyrimidine binding site. 140 to 142 (TAT) is a binding site for 2-[(2R,5Z)-2-carboxy-4-methylthiazol-5(2H)-ylidene]ethyl phosphate. Lysine 143 provides a ligand contact to 4-amino-2-methyl-5-(diphosphooxymethyl)pyrimidine. Residues glycine 174 and 194–195 (VS) contribute to the 2-[(2R,5Z)-2-carboxy-4-methylthiazol-5(2H)-ylidene]ethyl phosphate site. The tract at residues 245–500 (LSIAGTDPTG…GTGNGPVDHG (256 aa)) is hydroxymethylpyrimidine/phosphomethylpyrimidine kinase. Glutamine 282 contacts 4-amino-5-hydroxymethyl-2-methylpyrimidine. The interval 550 to 763 (FTRALWEASG…RHGWTMVGSS (214 aa)) is thiaminase-2.

In the N-terminal section; belongs to the thiamine-phosphate synthase family. It in the central section; belongs to the ThiD family. The protein in the C-terminal section; belongs to the thiaminase-2 family. Requires Mg(2+) as cofactor.

It catalyses the reaction 2-[(2R,5Z)-2-carboxy-4-methylthiazol-5(2H)-ylidene]ethyl phosphate + 4-amino-2-methyl-5-(diphosphooxymethyl)pyrimidine + 2 H(+) = thiamine phosphate + CO2 + diphosphate. It carries out the reaction 2-(2-carboxy-4-methylthiazol-5-yl)ethyl phosphate + 4-amino-2-methyl-5-(diphosphooxymethyl)pyrimidine + 2 H(+) = thiamine phosphate + CO2 + diphosphate. The catalysed reaction is 4-methyl-5-(2-phosphooxyethyl)-thiazole + 4-amino-2-methyl-5-(diphosphooxymethyl)pyrimidine + H(+) = thiamine phosphate + diphosphate. The enzyme catalyses 4-amino-5-hydroxymethyl-2-methylpyrimidine + ATP = 4-amino-2-methyl-5-(phosphooxymethyl)pyrimidine + ADP + H(+). It catalyses the reaction 4-amino-2-methyl-5-(phosphooxymethyl)pyrimidine + ATP = 4-amino-2-methyl-5-(diphosphooxymethyl)pyrimidine + ADP. Its pathway is cofactor biosynthesis; thiamine diphosphate biosynthesis; 4-amino-2-methyl-5-diphosphomethylpyrimidine from 5-amino-1-(5-phospho-D-ribosyl)imidazole: step 3/3. The protein operates within cofactor biosynthesis; thiamine diphosphate biosynthesis; thiamine phosphate from 4-amino-2-methyl-5-diphosphomethylpyrimidine and 4-methyl-5-(2-phosphoethyl)-thiazole: step 1/1. In terms of biological role, condenses 4-methyl-5-(beta-hydroxyethyl)thiazole monophosphate (THZ-P) and 2-methyl-4-amino-5-hydroxymethyl pyrimidine pyrophosphate (HMP-PP) to form thiamine monophosphate (TMP). Catalyzes the phosphorylation of hydroxymethylpyrimidine phosphate (HMP-P) to HMP-PP, and of HMP to HMP-P. This is Thiamine biosynthesis multifunctional protein ThiED (theD) from Corynebacterium glutamicum (strain ATCC 13032 / DSM 20300 / JCM 1318 / BCRC 11384 / CCUG 27702 / LMG 3730 / NBRC 12168 / NCIMB 10025 / NRRL B-2784 / 534).